The following is a 586-amino-acid chain: CTP synthase (586 aa).

Residues 1–278 (MRKHPQTATK…DAFVVRRLNL (278 aa)) form an amidoligase domain region. Residue S20 participates in CTP binding. Residue S20 coordinates UTP. Residues 21-26 (SLGKGL) and D78 contribute to the ATP site. 2 residues coordinate Mg(2+): D78 and E152. Residues 159–161 (DIE), 199–204 (KTKPTQ), and K235 each bind CTP. UTP is bound by residues 199-204 (KTKPTQ) and K235. Residues 303 to 551 (RIALVGKYVE…VGAAIDYKAG (249 aa)) enclose the Glutamine amidotransferase type-1 domain. G366 contacts L-glutamine. The Nucleophile; for glutamine hydrolysis role is filled by C393. L-glutamine-binding positions include 394–397 (LGLQ), E416, and R477. Residues H524 and E526 contribute to the active site. Positions 560–586 (EIPEHTPNGSSHRDGVGQPLPEPASRG) are disordered.

The protein belongs to the CTP synthase family. Homotetramer.

It catalyses the reaction UTP + L-glutamine + ATP + H2O = CTP + L-glutamate + ADP + phosphate + 2 H(+). The enzyme catalyses L-glutamine + H2O = L-glutamate + NH4(+). The catalysed reaction is UTP + NH4(+) + ATP = CTP + ADP + phosphate + 2 H(+). Its pathway is pyrimidine metabolism; CTP biosynthesis via de novo pathway; CTP from UDP: step 2/2. With respect to regulation, allosterically activated by GTP, when glutamine is the substrate; GTP has no effect on the reaction when ammonia is the substrate. The allosteric effector GTP functions by stabilizing the protein conformation that binds the tetrahedral intermediate(s) formed during glutamine hydrolysis. Inhibited by the product CTP, via allosteric rather than competitive inhibition. In terms of biological role, catalyzes the ATP-dependent amination of UTP to CTP with either L-glutamine or ammonia as the source of nitrogen. Regulates intracellular CTP levels through interactions with the four ribonucleotide triphosphates. The polypeptide is CTP synthase (Mycobacterium tuberculosis (strain ATCC 25177 / H37Ra)).